A 180-amino-acid polypeptide reads, in one-letter code: Protein SPMIP9 (180 aa).

As to quaternary structure, microtubule inner protein component of sperm flagellar doublet microtubules. Only detected after the mouse is 35 days old. Expression increases gradually from day 35 to 6 months, and remains stable after 54 days. Exclusively expressed in the epididymis and testis.

It localises to the nucleus. The protein resides in the cytoplasm. It is found in the cytoskeleton. The protein localises to the flagellum axoneme. Microtubule inner protein (MIP) part of the dynein-decorated doublet microtubules (DMTs) in flagella axoneme. The chain is Protein SPMIP9 (Spmip9) from Mus musculus (Mouse).